Reading from the N-terminus, the 259-residue chain is MEPESIGDVGNHAQDDSASIVSGPRRRSTSKTSSAKNIRNSSNISPASMIFRNLLILEDDLRRQAHEQKILKWQFTLFLASMAGVGAFTFYELYFTSDYVKGLHRVILQFTLSFISITVVLFHISGQYRRTIVIPRRFFTSTNKGIRQFNVKLVKVQSTWDEKYTDSVRFVSRTIAYCNIYCLKKFLWLKDDNAIVKFWKSVTIQSQPRIGAVDVKLVLNPRAFSAEIREGWEIYRDEFWAREGARRRKQAHELRPKSE.

Residues 1–40 (MEPESIGDVGNHAQDDSASIVSGPRRRSTSKTSSAKNIRN) are disordered. At 1–72 (MEPESIGDVG…RQAHEQKILK (72 aa)) the chain is on the cytoplasmic side. Residues 73–93 (WQFTLFLASMAGVGAFTFYEL) traverse the membrane as a helical segment. Topologically, residues 94–106 (YFTSDYVKGLHRV) are extracellular. The chain crosses the membrane as a helical span at residues 107-127 (ILQFTLSFISITVVLFHISGQ). Residues 128-259 (YRRTIVIPRR…QAHELRPKSE (132 aa)) are Cytoplasmic-facing.

In terms of assembly, component of the NEM1-SPO7 complex.

Its subcellular location is the endoplasmic reticulum membrane. It is found in the nucleus membrane. Its function is as follows. Regulatory component of the NEM1-SPO7 complex which acts as a phosphatase and dephosphorylates the phosphatidic acid phosphohydrolase PAH1. Essential for the formation of a spherical nucleus and meiotic division. The NEM1-SPOo7 protein phosphatase is required for efficient mitophagy under prolonged respiration, as well as for reticulophagy and pexophagy. In Saccharomyces cerevisiae (strain ATCC 204508 / S288c) (Baker's yeast), this protein is Sporulation-specific protein SPO7 (SPO7).